The chain runs to 408 residues: MDLIETVRPLAKKTDSKILMVVLDGVGGLPLTVNGETELATAKTPHLDALAAESQLGLVELVAAGITPGSGPGHLSLFGYDPLKYVVGRGALSAVGIGVKLNAGDVAVRGNFASLGESRLIIDRRAGRPSNEKNAEVVAKLRAAIPEIDGTPVEIYSESEHRFVVVFRATGTPLGADVSDVDPQVTGVPPRTAMAHDPASERTAHLVNAFVTRAEAALADESQVNGVLFRGYSDVPHFPNFDEIYQLRAACIASYPMYKGLASLVGMDVLPVEGEEDALAGKVAALKEHWHDYDFFYWHVKKTDSTGEDGDFAAKVKKIELFDALLPELRALQPDVLCIVGDHSTPSKLASHSWHPVPLLINSRYGRKDLAQRYTEEEAQKGSLGLRRGTDVMPLLMANALKLQKYGA.

This sequence belongs to the BPG-independent phosphoglycerate mutase family. A-PGAM subfamily.

The enzyme catalyses (2R)-2-phosphoglycerate = (2R)-3-phosphoglycerate. It participates in carbohydrate degradation; glycolysis; pyruvate from D-glyceraldehyde 3-phosphate: step 3/5. Its function is as follows. Catalyzes the interconversion of 2-phosphoglycerate and 3-phosphoglycerate. This is Probable 2,3-bisphosphoglycerate-independent phosphoglycerate mutase from Deinococcus geothermalis (strain DSM 11300 / CIP 105573 / AG-3a).